The primary structure comprises 401 residues: S-adenosylmethionine synthase (401 aa).

An ATP-binding site is contributed by 136–141 (GQGSVD).

Belongs to the AdoMet synthase 2 family. Mg(2+) is required as a cofactor.

It catalyses the reaction L-methionine + ATP + H2O = S-adenosyl-L-methionine + phosphate + diphosphate. Its pathway is amino-acid biosynthesis; S-adenosyl-L-methionine biosynthesis; S-adenosyl-L-methionine from L-methionine: step 1/1. In terms of biological role, catalyzes the formation of S-adenosylmethionine from methionine and ATP. The chain is S-adenosylmethionine synthase from Pyrococcus furiosus (strain ATCC 43587 / DSM 3638 / JCM 8422 / Vc1).